A 483-amino-acid chain; its full sequence is L-2-hydroxyglutarate dehydrogenase, mitochondrial (483 aa).

A mitochondrion-targeting transit peptide spans 1–67; the sequence is MKHKPETAAF…VDASKTIVRG (67 aa).

Belongs to the L2HGDH family. FAD is required as a cofactor.

The protein resides in the mitochondrion. The enzyme catalyses (S)-2-hydroxyglutarate + A = 2-oxoglutarate + AH2. Functionally, catalyzes the oxidation of (S)-2-hydroxyglutarate to 2-oxoglutarate. Is specific for the (S) enantiomer and possesses very poor activity toward (R)-2-hydroxyglutarate. Has no activity toward related 2-hydroxy acids, such as glycolate, L-lactate or D-lactate. This Arabidopsis thaliana (Mouse-ear cress) protein is L-2-hydroxyglutarate dehydrogenase, mitochondrial.